Reading from the N-terminus, the 156-residue chain is Small ribosomal subunit protein uS7 (156 aa).

The protein belongs to the universal ribosomal protein uS7 family. In terms of assembly, part of the 30S ribosomal subunit. Contacts proteins S9 and S11.

Its function is as follows. One of the primary rRNA binding proteins, it binds directly to 16S rRNA where it nucleates assembly of the head domain of the 30S subunit. Is located at the subunit interface close to the decoding center, probably blocks exit of the E-site tRNA. This chain is Small ribosomal subunit protein uS7, found in Psychromonas ingrahamii (strain DSM 17664 / CCUG 51855 / 37).